Reading from the N-terminus, the 225-residue chain is Ferric nitrobindin-like protein (225 aa).

The GXWXGXG signature appears at Gly78 to Gly84.

Belongs to the nitrobindin family.

In Corynebacterium diphtheriae (strain ATCC 700971 / NCTC 13129 / Biotype gravis), this protein is Ferric nitrobindin-like protein.